Here is a 160-residue protein sequence, read N- to C-terminus: Eosinophil cationic protein (160 aa).

Positions 1 to 27 (MVPKLFTPQICLLLLLGLMGVEGSLHA) are cleaved as a signal peptide. The tract at residues 28–72 (RPPQFTKAQWFAIQHINVNPPRCTIAMRVINNYQRRCKNQNTFLR) is required for nearly all of the bactericidal activities; partially involved in LPS-binding. His42 functions as the Proton acceptor in the catalytic mechanism. Disulfide bonds link Cys50/Cys110, Cys64/Cys123, Cys82/Cys138, and Cys89/Cys98. Position 60 is a 3'-nitrotyrosine (Tyr60). 65-69 (KNQNT) serves as a coordination point for substrate. Residues Asn84, Asn92, and Asn119 are each glycosylated (N-linked (GlcNAc...) asparagine). The active-site Proton donor is the His155.

This sequence belongs to the pancreatic ribonuclease family. In terms of assembly, interacts with bacterial lipopolysaccharide (LPS) and lipoteichoic acid (LTA). In vitro interacts with phospholipid bilayers.

The protein resides in the secreted. Cytotoxin and helminthotoxin with low-efficiency ribonuclease activity. Possesses a wide variety of biological activities. Exhibits antibacterial activity. The sequence is that of Eosinophil cationic protein (RNASE3) from Macaca nemestrina (Pig-tailed macaque).